The primary structure comprises 347 residues: S-adenosylmethionine:tRNA ribosyltransferase-isomerase (347 aa).

The protein belongs to the QueA family. As to quaternary structure, monomer.

It is found in the cytoplasm. It carries out the reaction 7-aminomethyl-7-carbaguanosine(34) in tRNA + S-adenosyl-L-methionine = epoxyqueuosine(34) in tRNA + adenine + L-methionine + 2 H(+). It functions in the pathway tRNA modification; tRNA-queuosine biosynthesis. Its function is as follows. Transfers and isomerizes the ribose moiety from AdoMet to the 7-aminomethyl group of 7-deazaguanine (preQ1-tRNA) to give epoxyqueuosine (oQ-tRNA). The polypeptide is S-adenosylmethionine:tRNA ribosyltransferase-isomerase (Streptococcus thermophilus (strain ATCC BAA-491 / LMD-9)).